The following is a 654-amino-acid chain: Chaperone protein HtpG (654 aa).

The a; substrate-binding stretch occupies residues 1 to 344 (MTVENAPQRE…SDDLPLNVSR (344 aa)). Residues 345 to 556 (ELLQDSQVVR…EGGSPAYLER (212 aa)) are b. A c region spans residues 557–654 (LLQQRGRGAG…AQTPASATAS (98 aa)).

Belongs to the heat shock protein 90 family. In terms of assembly, homodimer.

The protein resides in the cytoplasm. Molecular chaperone. Has ATPase activity. This Myxococcus xanthus (strain DK1622) protein is Chaperone protein HtpG.